We begin with the raw amino-acid sequence, 161 residues long: Large ribosomal subunit protein uL15 (161 aa).

Residues 1-47 (MKLHELHDNPGANRKKKRVARGPGSGKGKTAGRGIKGQTSRSGVALN) form a disordered region. Over residues 23-35 (PGSGKGKTAGRGI) the composition is skewed to gly residues.

It belongs to the universal ribosomal protein uL15 family. Part of the 50S ribosomal subunit.

Functionally, binds to the 23S rRNA. The protein is Large ribosomal subunit protein uL15 of Paracoccus denitrificans (strain Pd 1222).